Here is a 266-residue protein sequence, read N- to C-terminus: Undecaprenyl-diphosphatase (266 aa).

Transmembrane regions (helical) follow at residues 1–21 (METF…FLPI), 39–59 (QGLS…VIYF), 87–107 (WWII…KDFI), 111–131 (FRNT…LWAA), 144–164 (MGWK…IPGT), 183–203 (AAAR…ALLV), 218–238 (ALGL…HFFL), and 244–264 (IGMT…LGLL).

It belongs to the UppP family.

Its subcellular location is the cell inner membrane. The enzyme catalyses di-trans,octa-cis-undecaprenyl diphosphate + H2O = di-trans,octa-cis-undecaprenyl phosphate + phosphate + H(+). Catalyzes the dephosphorylation of undecaprenyl diphosphate (UPP). Confers resistance to bacitracin. This Shewanella frigidimarina (strain NCIMB 400) protein is Undecaprenyl-diphosphatase.